The chain runs to 360 residues: DNA replication and repair protein RecF (360 aa).

ATP is bound at residue 30–37 (GQNGSGKT).

This sequence belongs to the RecF family.

The protein localises to the cytoplasm. The RecF protein is involved in DNA metabolism; it is required for DNA replication and normal SOS inducibility. RecF binds preferentially to single-stranded, linear DNA. It also seems to bind ATP. The sequence is that of DNA replication and repair protein RecF from Shewanella oneidensis (strain ATCC 700550 / JCM 31522 / CIP 106686 / LMG 19005 / NCIMB 14063 / MR-1).